Consider the following 295-residue polypeptide: Shikimate dehydrogenase (NADP(+)) (295 aa).

Residues 24-26 (SRS) and Thr71 each bind shikimate. Lys75 serves as the catalytic Proton acceptor. Residue Glu87 coordinates NADP(+). Shikimate is bound by residues Asn96 and Asp111. NADP(+) contacts are provided by residues 136–140 (GAGGA), 160–165 (NRTASR), and Met233. Position 235 (Tyr235) interacts with shikimate. Residue Gly256 coordinates NADP(+).

It belongs to the shikimate dehydrogenase family. Homodimer.

It carries out the reaction shikimate + NADP(+) = 3-dehydroshikimate + NADPH + H(+). Its pathway is metabolic intermediate biosynthesis; chorismate biosynthesis; chorismate from D-erythrose 4-phosphate and phosphoenolpyruvate: step 4/7. Involved in the biosynthesis of the chorismate, which leads to the biosynthesis of aromatic amino acids. Catalyzes the reversible NADPH linked reduction of 3-dehydroshikimate (DHSA) to yield shikimate (SA). In Cupriavidus necator (strain ATCC 17699 / DSM 428 / KCTC 22496 / NCIMB 10442 / H16 / Stanier 337) (Ralstonia eutropha), this protein is Shikimate dehydrogenase (NADP(+)).